The chain runs to 210 residues: Prolactin-2 (210 aa).

The N-terminal stretch at 1-23 is a signal peptide; that stretch reads MARRSQGTKLHLAVLCLVVSCHA. 2 cysteine pairs are disulfide-bonded: cysteine 69/cysteine 183 and cysteine 200/cysteine 210.

The protein belongs to the somatotropin/prolactin family.

The protein localises to the secreted. The chain is Prolactin-2 (prl2) from Oncorhynchus keta (Chum salmon).